A 178-amino-acid polypeptide reads, in one-letter code: Ribosome maturation factor RimM (178 aa).

The PRC barrel domain occupies 101-178; the sequence is ADEYYWYQLE…VMRVEWDADF (78 aa).

This sequence belongs to the RimM family. As to quaternary structure, binds ribosomal protein uS19.

It localises to the cytoplasm. Its function is as follows. An accessory protein needed during the final step in the assembly of 30S ribosomal subunit, possibly for assembly of the head region. Essential for efficient processing of 16S rRNA. May be needed both before and after RbfA during the maturation of 16S rRNA. It has affinity for free ribosomal 30S subunits but not for 70S ribosomes. The sequence is that of Ribosome maturation factor RimM from Pseudomonas fluorescens (strain Pf0-1).